The primary structure comprises 288 residues: uncharacterized protein (288 aa).

Disordered stretches follow at residues 31–52 (KAVD…EAPS) and 179–288 (YPSK…VELK). The span at 206–217 (RPSSPTNFSKLI) shows a compositional bias: polar residues. A compositionally biased stretch (basic and acidic residues) spans 221 to 236 (YKDEWLQQQADSDKRA). Low complexity-rich tracts occupy residues 237 to 249 (PQTP…SPSP) and 267 to 276 (AAESSPLSSA).

This is an uncharacterized protein from Bos taurus (Bovine).